The primary structure comprises 817 residues: DNA ligase (817 aa).

Residues 45 to 49 (DVEYD), 94 to 95 (SI), and Glu-131 each bind NAD(+). Lys-133 (N6-AMP-lysine intermediate) is an active-site residue. Arg-154, Glu-193, Lys-311, and Lys-335 together coordinate NAD(+). Positions 444, 447, 462, and 468 each coordinate Zn(2+). The 85-residue stretch at 733 to 817 (AEEGVLDGKT…LLKKPAGDQA (85 aa)) folds into the BRCT domain.

Belongs to the NAD-dependent DNA ligase family. LigA subfamily. Mg(2+) is required as a cofactor. It depends on Mn(2+) as a cofactor.

The enzyme catalyses NAD(+) + (deoxyribonucleotide)n-3'-hydroxyl + 5'-phospho-(deoxyribonucleotide)m = (deoxyribonucleotide)n+m + AMP + beta-nicotinamide D-nucleotide.. Its function is as follows. DNA ligase that catalyzes the formation of phosphodiester linkages between 5'-phosphoryl and 3'-hydroxyl groups in double-stranded DNA using NAD as a coenzyme and as the energy source for the reaction. It is essential for DNA replication and repair of damaged DNA. This is DNA ligase from Ralstonia pickettii (strain 12J).